The chain runs to 179 residues: Bifunctional protein PyrR (179 aa).

The PRPP-binding motif lies at 100-112 (VILVDDVLFTGRT).

It belongs to the purine/pyrimidine phosphoribosyltransferase family. PyrR subfamily. As to quaternary structure, homodimer and homohexamer; in equilibrium.

The enzyme catalyses UMP + diphosphate = 5-phospho-alpha-D-ribose 1-diphosphate + uracil. Regulates transcriptional attenuation of the pyrimidine nucleotide (pyr) operon by binding in a uridine-dependent manner to specific sites on pyr mRNA. This disrupts an antiterminator hairpin in the RNA and favors formation of a downstream transcription terminator, leading to a reduced expression of downstream genes. In terms of biological role, also displays a weak uracil phosphoribosyltransferase activity which is not physiologically significant. The sequence is that of Bifunctional protein PyrR from Geobacillus sp. (strain WCH70).